Consider the following 132-residue polypeptide: Small ribosomal subunit protein uS8 (132 aa).

It belongs to the universal ribosomal protein uS8 family. Part of the 30S ribosomal subunit. Contacts proteins S5 and S12.

Functionally, one of the primary rRNA binding proteins, it binds directly to 16S rRNA central domain where it helps coordinate assembly of the platform of the 30S subunit. This Micrococcus luteus (strain ATCC 4698 / DSM 20030 / JCM 1464 / CCM 169 / CCUG 5858 / IAM 1056 / NBRC 3333 / NCIMB 9278 / NCTC 2665 / VKM Ac-2230) (Micrococcus lysodeikticus) protein is Small ribosomal subunit protein uS8.